Reading from the N-terminus, the 307-residue chain is MVGGGVIQQILRRKLHSQSLATPVLSWFSSKKAHEDAGSSGVRALALLGAGVTGLLSFSTVASADEAEHGLESPEYPWPHDGILSSYDHASIRRGHQVYQQVCASCHSMSLISYRDLVGVAYTEEEAKAMAAEIEVVDGPNDEGEMFTRPGKLSDRFPQPYANESAARFANGGAYPPDLSLITKARHNGPNYVFALLTGYRDPPAGISIREGLHYNPYFPGGAIAMPKMLNDEAVEYEDGVPATEAQMGKDIVSFLAWAAEPEMEERKLMGFKWIFLLSLALLQAAYYRRLKWSVLKSRKLVLDVVN.

The N-terminal 64 residues, 1–64 (MVGGGVIQQI…LLSFSTVASA (64 aa)), are a transit peptide targeting the mitochondrion. Over 65–270 (DEAEHGLESP…EPEMEERKLM (206 aa)) the chain is Mitochondrial intermembrane. Residues 90-246 (ASIRRGHQVY…YEDGVPATEA (157 aa)) form the Cytochrome c domain. 4 residues coordinate heme c: Cys-103, Cys-106, His-107, and Met-226. Residues 271–288 (GFKWIFLLSLALLQAAYY) traverse the membrane as a helical segment. Residues 289–307 (RRLKWSVLKSRKLVLDVVN) lie on the Mitochondrial matrix side of the membrane.

The protein belongs to the cytochrome c family. Component of the ubiquinol-cytochrome c oxidoreductase (cytochrome b-c1 complex, complex III, CIII), a multisubunit enzyme composed of 10 subunits. The complex is composed of 3 respiratory subunits cytochrome b (MT-CYB), cytochrome c1 (CYC1-1 or CYC1-2) and Rieske protein (UCR1-1 or UCR1-2), 2 core protein subunits MPPalpha1 (or MPPalpha2) and MPPB, and 5 low-molecular weight protein subunits QCR7-1 (or QCR7-2), UCRQ-1 (or UCRQ-2), QCR9, UCRY and probably QCR6-1 (or QCR6-2). The complex exists as an obligatory dimer and forms supercomplexes (SCs) in the inner mitochondrial membrane with NADH-ubiquinone oxidoreductase (complex I, CI), resulting in different assemblies (supercomplexes SCI(1)III(2) and SCI(2)III(4)). In terms of processing, binds 1 heme c group covalently per subunit.

It is found in the mitochondrion inner membrane. Component of the ubiquinol-cytochrome c oxidoreductase, a multisubunit transmembrane complex that is part of the mitochondrial electron transport chain which drives oxidative phosphorylation. The respiratory chain contains 3 multisubunit complexes succinate dehydrogenase (complex II, CII), ubiquinol-cytochrome c oxidoreductase (cytochrome b-c1 complex, complex III, CIII) and cytochrome c oxidase (complex IV, CIV), that cooperate to transfer electrons derived from NADH and succinate to molecular oxygen, creating an electrochemical gradient over the inner membrane that drives transmembrane transport and the ATP synthase. The cytochrome b-c1 complex catalyzes electron transfer from ubiquinol to cytochrome c, linking this redox reaction to translocation of protons across the mitochondrial inner membrane, with protons being carried across the membrane as hydrogens on the quinol. In the process called Q cycle, 2 protons are consumed from the matrix, 4 protons are released into the intermembrane space and 2 electrons are passed to cytochrome c. Cytochrome c1 is a catalytic core subunit containing a c-type heme. It transfers electrons from the [2Fe-2S] iron-sulfur cluster of the Rieske protein to cytochrome c. The polypeptide is Cytochrome c1 1, heme protein, mitochondrial (CYC1-1) (Arabidopsis thaliana (Mouse-ear cress)).